A 224-amino-acid chain; its full sequence is Heme response regulator HssR (224 aa).

Positions 3–116 (QCLVVDDDSR…ELIFRIRAVL (114 aa)) constitute a Response regulatory domain. Asp-52 is subject to 4-aspartylphosphate. Positions 124-222 (NSEMTIGNLT…VRGQGYKVEN (99 aa)) form a DNA-binding region, ompR/PhoB-type.

Phosphorylated by HssS.

The protein localises to the cytoplasm. Functionally, member of the two-component regulatory system HssS/HssR involved in intracellular heme homeostasis and tempering of staphylococcal virulence. Phosphorylated HssR binds to a direct repeat sequence within hrtAB promoter and activates the expression of hrtAB, an efflux pump, in response to extracellular heme, hemin, hemoglobin or blood. This is Heme response regulator HssR (hssR) from Staphylococcus aureus (strain bovine RF122 / ET3-1).